We begin with the raw amino-acid sequence, 165 residues long: 3-isopropylmalate dehydratase small subunit (165 aa).

This sequence belongs to the LeuD family. LeuD type 2 subfamily. As to quaternary structure, heterodimer of LeuC and LeuD.

The catalysed reaction is (2R,3S)-3-isopropylmalate = (2S)-2-isopropylmalate. It functions in the pathway amino-acid biosynthesis; L-leucine biosynthesis; L-leucine from 3-methyl-2-oxobutanoate: step 2/4. Its function is as follows. Catalyzes the isomerization between 2-isopropylmalate and 3-isopropylmalate, via the formation of 2-isopropylmaleate. This chain is 3-isopropylmalate dehydratase small subunit, found in Helicobacter hepaticus (strain ATCC 51449 / 3B1).